The sequence spans 332 residues: Beta-hexosaminidase (332 aa).

Residues Asp-62, Arg-70, Arg-131, and 161–162 (KH) each bind substrate. The active-site Proton donor/acceptor is His-174. Asp-244 acts as the Nucleophile in catalysis.

The protein belongs to the glycosyl hydrolase 3 family. NagZ subfamily.

Its subcellular location is the cytoplasm. The enzyme catalyses Hydrolysis of terminal non-reducing N-acetyl-D-hexosamine residues in N-acetyl-beta-D-hexosaminides.. It participates in cell wall biogenesis; peptidoglycan recycling. In terms of biological role, plays a role in peptidoglycan recycling by cleaving the terminal beta-1,4-linked N-acetylglucosamine (GlcNAc) from peptide-linked peptidoglycan fragments, giving rise to free GlcNAc, anhydro-N-acetylmuramic acid and anhydro-N-acetylmuramic acid-linked peptides. The chain is Beta-hexosaminidase from Pseudomonas aeruginosa (strain LESB58).